A 73-amino-acid polypeptide reads, in one-letter code: Protein SlyX homolog (73 aa).

The protein belongs to the SlyX family.

This is Protein SlyX homolog from Histophilus somni (strain 2336) (Haemophilus somnus).